A 317-amino-acid chain; its full sequence is Transcription cofactor vestigial-like protein 2 (317 aa).

Disordered regions lie at residues 41-76 (CNAS…ERPP), 108-128 (SQPS…SSGP), 191-214 (TEPW…GGAL), and 253-293 (RLAT…PSGD). The span at 44–57 (SPSSSGSGSSSFSS) shows a compositional bias: low complexity. A compositionally biased stretch (basic and acidic residues) spans 63–76 (IKEEEGSPEKERPP). Over residues 108 to 120 (SQPSSYSPSCTSS) the composition is skewed to low complexity. The span at 196–206 (HAHPHHAHPHH) shows a compositional bias: basic residues. Over residues 272 to 292 (KGEPAGAAWAGPGGPFASPSG) the composition is skewed to low complexity.

Belongs to the vestigial family. Interacts with TEFs. Binds to TEAD1/TEF1. In terms of tissue distribution, skeletal muscle.

The protein resides in the nucleus. Its function is as follows. May act as a specific coactivator for the mammalian TEFs. May play a role in the development of skeletal muscles. This Homo sapiens (Human) protein is Transcription cofactor vestigial-like protein 2 (VGLL2).